A 157-amino-acid polypeptide reads, in one-letter code: Peptide methionine sulfoxide reductase MsrA (157 aa).

Residue Cys-10 is part of the active site.

The protein belongs to the MsrA Met sulfoxide reductase family.

The catalysed reaction is L-methionyl-[protein] + [thioredoxin]-disulfide + H2O = L-methionyl-(S)-S-oxide-[protein] + [thioredoxin]-dithiol. The enzyme catalyses [thioredoxin]-disulfide + L-methionine + H2O = L-methionine (S)-S-oxide + [thioredoxin]-dithiol. Functionally, has an important function as a repair enzyme for proteins that have been inactivated by oxidation. Catalyzes the reversible oxidation-reduction of methionine sulfoxide in proteins to methionine. The sequence is that of Peptide methionine sulfoxide reductase MsrA from Clostridium perfringens (strain ATCC 13124 / DSM 756 / JCM 1290 / NCIMB 6125 / NCTC 8237 / Type A).